The primary structure comprises 237 residues: Probable transcriptional regulatory protein MCAP_0598 (237 aa).

This sequence belongs to the TACO1 family.

It localises to the cytoplasm. This chain is Probable transcriptional regulatory protein MCAP_0598, found in Mycoplasma capricolum subsp. capricolum (strain California kid / ATCC 27343 / NCTC 10154).